Here is a 163-residue protein sequence, read N- to C-terminus: Small ribosomal subunit protein uS5 (163 aa).

The 64-residue stretch at 8–71 (LVEKIVYLNR…ERAKKDMVQI (64 aa)) folds into the S5 DRBM domain.

The protein belongs to the universal ribosomal protein uS5 family. Part of the 30S ribosomal subunit. Contacts proteins S4 and S8.

In terms of biological role, with S4 and S12 plays an important role in translational accuracy. Functionally, located at the back of the 30S subunit body where it stabilizes the conformation of the head with respect to the body. In Nitratidesulfovibrio vulgaris (strain DSM 19637 / Miyazaki F) (Desulfovibrio vulgaris), this protein is Small ribosomal subunit protein uS5.